A 315-amino-acid chain; its full sequence is Eukaryotic translation initiation factor 2 subunit 1 (315 aa).

The 72-residue stretch at 17-88 (DDVVMVNVRS…DKGYIDLSKR (72 aa)) folds into the S1 motif domain. Residues Ser49 and Ser52 each carry the phosphoserine modification. The tract at residues 292-315 (RLEKENAEVDGDDDAEEMEAKTED) is disordered. Acidic residues predominate over residues 299 to 308 (EVDGDDDAEE).

The protein belongs to the eIF-2-alpha family. Eukaryotic translation initiation factor 2 eIF2 is a heterotrimeric complex composed of an alpha, a beta and a gamma subunit. Post-translationally, phosphorylation at Ser-49 and Ser-52 stabilizes the eIF-2/GDP/eIF2B complex and prevents GDP/GTP exchange reaction, thus impairing the recycling of eIF-2 between successive rounds of initiation and leading to global inhibition of translation, while concomitantly initiating the preferential translation of integrated stress response (ISR)-specific mRNAs.

The protein resides in the cytoplasm. The protein localises to the stress granule. It localises to the cytosol. Activity is regulated by phosphorylation at Ser-49 and Ser-52, which stabilizes the eIF-2/GDP/eIF2B complex and prevents the eIF2B-mediated exchange of GDP for GTP, thereby preventing the formation of the 43S pre-initiation complex (PIC). This results in the global attenuation of 5' cap-dependent protein synthesis and concomitant translation of ISR-specific mRNAs that contain a short upstream open reading frame (uORF) in their 5' UTR. Its function is as follows. Functions in the early steps of protein synthesis by forming a ternary complex with GTP and initiator tRNA. This complex binds to a 40S ribosomal subunit, followed by mRNA binding to form a 43S pre-initiation complex. Junction of the 60S ribosomal subunit to form the 80S initiation complex is preceded by hydrolysis of the GTP bound to eIF-2 and release of an eIF-2-GDP binary complex. In order for eIF-2 to recycle and catalyze another round of initiation, the GDP bound to eIF-2 must exchange with GTP by way of a reaction catalyzed by eIF2B. EIF2S1/eIF2-alpha is a key component of the integrated stress response (ISR), required for adaptation to various stress: phosphorylation by metabolic-stress sensing protein kinases in response to stress converts EIF2S1/eIF-2-alpha in a global protein synthesis inhibitor, leading to a attenuation of cap-dependent translation, while concomitantly initiating the preferential translation of ISR-specific mRNAs, such as the transcriptional activators ATF4 and QRICH1. This chain is Eukaryotic translation initiation factor 2 subunit 1 (eif2s1), found in Xenopus tropicalis (Western clawed frog).